Here is a 114-residue protein sequence, read N- to C-terminus: MITVYGIKNCDTVKKALKWLADHNIEHKLHDYRVDGLDLNFLTQAETQFGWDVLVNKRSTTWRNLDEQVKNSLDKTTALSVLAENPTLIKRPIILQDGKALIGFNEKEYQAAFA.

Cysteine 10 is a catalytic residue.

This sequence belongs to the ArsC family.

This is an uncharacterized protein from Haemophilus influenzae (strain ATCC 51907 / DSM 11121 / KW20 / Rd).